Here is a 257-residue protein sequence, read N- to C-terminus: uncharacterized protein (257 aa).

This is an uncharacterized protein from Mycobacterium tuberculosis (strain CDC 1551 / Oshkosh).